The following is a 177-amino-acid chain: Large ribosomal subunit protein uL22 (177 aa).

Residues 118 to 177 (VESRPSREGRRGGAGESAGGARARRAQGSKAAAAKKAPASSSTKAATTTEASEEAKGGSQ) form a disordered region. Basic and acidic residues predominate over residues 121–130 (RPSREGRRGG). Positions 145-167 (GSKAAAAKKAPASSSTKAATTTE) are enriched in low complexity.

This sequence belongs to the universal ribosomal protein uL22 family. In terms of assembly, part of the 50S ribosomal subunit.

Functionally, this protein binds specifically to 23S rRNA; its binding is stimulated by other ribosomal proteins, e.g. L4, L17, and L20. It is important during the early stages of 50S assembly. It makes multiple contacts with different domains of the 23S rRNA in the assembled 50S subunit and ribosome. The globular domain of the protein is located near the polypeptide exit tunnel on the outside of the subunit, while an extended beta-hairpin is found that lines the wall of the exit tunnel in the center of the 70S ribosome. The polypeptide is Large ribosomal subunit protein uL22 (Mycobacterium sp. (strain JLS)).